Reading from the N-terminus, the 130-residue chain is Small ribosomal subunit protein uS11c (130 aa).

This sequence belongs to the universal ribosomal protein uS11 family. In terms of assembly, part of the 30S ribosomal subunit.

Its subcellular location is the plastid. It is found in the chloroplast. This Zygnema circumcarinatum (Green alga) protein is Small ribosomal subunit protein uS11c.